The primary structure comprises 638 residues: 1-deoxy-D-xylulose-5-phosphate synthase (638 aa).

Thiamine diphosphate is bound by residues H77 and 118 to 120 (AHA). D149 is a Mg(2+) binding site. Residues 150 to 151 (GS), N178, Y287, and E369 each bind thiamine diphosphate. Residue N178 coordinates Mg(2+).

Belongs to the transketolase family. DXPS subfamily. Homodimer. Requires Mg(2+) as cofactor. Thiamine diphosphate is required as a cofactor.

It catalyses the reaction D-glyceraldehyde 3-phosphate + pyruvate + H(+) = 1-deoxy-D-xylulose 5-phosphate + CO2. The protein operates within metabolic intermediate biosynthesis; 1-deoxy-D-xylulose 5-phosphate biosynthesis; 1-deoxy-D-xylulose 5-phosphate from D-glyceraldehyde 3-phosphate and pyruvate: step 1/1. In terms of biological role, catalyzes the acyloin condensation reaction between C atoms 2 and 3 of pyruvate and glyceraldehyde 3-phosphate to yield 1-deoxy-D-xylulose-5-phosphate (DXP). This Phenylobacterium zucineum (strain HLK1) protein is 1-deoxy-D-xylulose-5-phosphate synthase.